A 224-amino-acid chain; its full sequence is UPF0758 protein Tola_0183 (224 aa).

An MPN domain is found at 102–224 (SLTSPQLVRR…PVSFAERGWL (123 aa)). Residues histidine 173, histidine 175, and aspartate 186 each coordinate Zn(2+). Positions 173–186 (HNHPSGVAEPSHAD) match the JAMM motif motif.

The protein belongs to the UPF0758 family.

The protein is UPF0758 protein Tola_0183 of Tolumonas auensis (strain DSM 9187 / NBRC 110442 / TA 4).